A 232-amino-acid polypeptide reads, in one-letter code: VLGGDECDINEHPFLAFLYSHGYFCGLTLINQEWVVTAAHCDSTNFQMQLGVHSKKVLNEDEQTRNPKEKFICPNKNMSEVLDKDIMLIKLDKPISNSKHIAPLSLPSNPPSVGSVCRIMGWGSITIPNETYPDVPYCANINLVDYEVCQGAYNGLPAKTTLCAGVLEGGKDTCVGDSGGPLICNGQFQGIVSYGAHSCGQGPKPGIYTNVFDYTDWIQRNIAGNTDATCPP.

The 223-residue stretch at 1–223 (VLGGDECDIN…YTDWIQRNIA (223 aa)) folds into the Peptidase S1 domain. Disulfide bonds link Cys7/Cys138, Cys25/Cys41, Cys73/Cys230, Cys117/Cys184, Cys149/Cys163, and Cys174/Cys199. The Charge relay system role is filled by His40. An N-linked (GlcNAc...) asparagine glycan is attached at Asn77. Asp85 serves as the catalytic Charge relay system. Residue Asn129 is glycosylated (N-linked (GlcNAc...) asparagine). The active-site Charge relay system is Ser178.

The protein belongs to the peptidase S1 family. Snake venom subfamily. Monomer. In terms of processing, N-glycosylated. Contains sialic acid residues. Deglycosylation reduces in 50% the formation of fibrin clot. In terms of tissue distribution, expressed by the venom gland.

It is found in the secreted. Its activity is regulated as follows. Inhibited by leupeptin, heparin, and 1.10-phenantroline. Its function is as follows. Thrombin-like enzyme that shows clotting activity upon human plasma. Shows specific fibrinogenolytic activity for Aalpha chain (FGA). Hydrolyzes fibrin, BAPNA and TAME, as well as chromogenic artificial substrates of the blood coagulation cascasde: S-27654 for factor X (F10), S-2302 for kallikrein (KLK), factor XIa (F11), and XIIa (F12), and S-2266 for kallikrein and factor XIa (F11). Subcutaneous injection into mice induces a mild edema. Intravenous and intramuscular injection reduce plasma fibrinogen concentration and increase the levels of fibrin(ogen) degradation products. Intramuscular injection also promotes an increase in the expression of proMMP-9, but is unable to activate it. This chain is Thrombin-like enzyme BjussuSP-1, found in Bothrops jararacussu (Jararacussu).